The sequence spans 71 residues: UPF0346 protein SAK_1533 (71 aa).

This sequence belongs to the UPF0346 family.

This Streptococcus agalactiae serotype Ia (strain ATCC 27591 / A909 / CDC SS700) protein is UPF0346 protein SAK_1533.